The chain runs to 59 residues: Temporin-CDYe (59 aa).

A signal peptide spans 1-22; sequence MFTLKKSMLLLLFLGTISLTLC. A propeptide spanning residues 23 to 42 is cleaved from the precursor; that stretch reads EEERDANEEEENGGEVKVEE.

It belongs to the frog skin active peptide (FSAP) family. Temporin subfamily. As to expression, expressed by the skin glands.

The protein resides in the secreted. In terms of biological role, antimicrobial peptide. The chain is Temporin-CDYe from Rana dybowskii (Dybovsky's frog).